The primary structure comprises 89 residues: Large ribosomal subunit protein eL34 (89 aa).

A disordered region spans residues 1-22 (MPAPRYKSGSSKKVYRKAPGNS).

It belongs to the eukaryotic ribosomal protein eL34 family.

The protein is Large ribosomal subunit protein eL34 of Methanococcus maripaludis (strain C5 / ATCC BAA-1333).